Here is a 41-residue protein sequence, read N- to C-terminus: Photosystem I reaction center subunit IX (41 aa).

The helical transmembrane segment at 7–27 threads the bilayer; it reads YLSTAPVLATLWFGLLAGILI.

The protein belongs to the PsaJ family.

Its subcellular location is the plastid. The protein resides in the chloroplast thylakoid membrane. Functionally, may help in the organization of the PsaE and PsaF subunits. The chain is Photosystem I reaction center subunit IX from Chara vulgaris (Common stonewort).